The primary structure comprises 228 residues: Lipoprotein-releasing system ATP-binding protein LolD (228 aa).

The ABC transporter domain occupies 6–225 (LEAKDVYKHF…ILHMQDGLWV (220 aa)). Residue 42–49 (GASGSGKS) coordinates ATP.

It belongs to the ABC transporter superfamily. Lipoprotein translocase (TC 3.A.1.125) family. The complex is composed of two ATP-binding proteins (LolD) and two transmembrane proteins (LolC and LolE).

Its subcellular location is the cell inner membrane. Functionally, part of the ABC transporter complex LolCDE involved in the translocation of mature outer membrane-directed lipoproteins, from the inner membrane to the periplasmic chaperone, LolA. Responsible for the formation of the LolA-lipoprotein complex in an ATP-dependent manner. The protein is Lipoprotein-releasing system ATP-binding protein LolD of Acinetobacter baylyi (strain ATCC 33305 / BD413 / ADP1).